The chain runs to 719 residues: DNA ligase (719 aa).

NAD(+)-binding positions include 42 to 46, 91 to 92, and glutamate 125; these read DAEYD and SL. Lysine 127 (N6-AMP-lysine intermediate) is an active-site residue. NAD(+)-binding residues include arginine 148, glutamate 184, lysine 300, and lysine 324. The Zn(2+) site is built by cysteine 429, cysteine 432, cysteine 447, and cysteine 453. The BRCT domain maps to 638 to 719; sequence TASSPIAGKT…WLQLIEGSYI (82 aa).

The protein belongs to the NAD-dependent DNA ligase family. LigA subfamily. The cofactor is Mg(2+). Requires Mn(2+) as cofactor.

The enzyme catalyses NAD(+) + (deoxyribonucleotide)n-3'-hydroxyl + 5'-phospho-(deoxyribonucleotide)m = (deoxyribonucleotide)n+m + AMP + beta-nicotinamide D-nucleotide.. Functionally, DNA ligase that catalyzes the formation of phosphodiester linkages between 5'-phosphoryl and 3'-hydroxyl groups in double-stranded DNA using NAD as a coenzyme and as the energy source for the reaction. It is essential for DNA replication and repair of damaged DNA. This is DNA ligase from Bartonella quintana (strain Toulouse) (Rochalimaea quintana).